The primary structure comprises 363 residues: Hydroxycarboxylic acid receptor 2 (363 aa).

Topologically, residues 1-33 (MNRHHLQDHFLEIDKKNCCVFRDDFIVKVLPPV) are extracellular. A helical transmembrane segment spans residues 34 to 54 (LGLEFIFGLLGNGLALWIFCF). Residues 55 to 63 (HLKSWKSSR) are Cytoplasmic-facing. Residues 64 to 84 (IFLFNLAVADFLLIICLPFLM) form a helical membrane-spanning segment. Topologically, residues 85 to 102 (DNYVRRWDWKFGDIPCRL) are extracellular. Cys-100 and Cys-177 form a disulfide bridge. Residues 103–123 (MLFMLAMNRQGSIIFLTVVAV) form a helical membrane-spanning segment. Residues 124-142 (DRYFRVVHPHHALNKISNR) are Cytoplasmic-facing. The helical transmembrane segment at 143–163 (TAAIISCLLWGITIGLTVHLL) threads the bilayer. At 164–192 (KKKMPIQNGGANLCSSFSICHTFQWHEAM) the chain is on the extracellular side. A helical membrane pass occupies residues 193–213 (FLLEFFLPLGIILFCSARIIW). The Cytoplasmic segment spans residues 214-229 (SLRQRQMDRHAKIKRA). Residues 230–250 (ITFIMVVAIVFVICFLPSVVV) traverse the membrane as a helical segment. Topologically, residues 251–273 (RIRIFWLLHTSGTQNCEVYRSVD) are extracellular. Residues 274-294 (LAFFITLSFTYMNSMLDPVVY) traverse the membrane as a helical segment. At 295–363 (YFSSPSFPNF…SPSYLGPTSP (69 aa)) the chain is on the cytoplasmic side. The segment at 319–363 (GEPDNNRSTSVELTGDPNKTRGAPEALMANSGEPWSPSYLGPTSP) is disordered. Ser-328 is modified (phosphoserine).

It belongs to the G-protein coupled receptor 1 family. Expression largely restricted to adipose tissue and spleen. Expressed on mature neutrophils but not on immature neutrophils or eosinophils.

The protein resides in the cell membrane. Acts as a high affinity receptor for both nicotinic acid (also known as niacin) and (D)-beta-hydroxybutyrate and mediates increased adiponectin secretion and decreased lipolysis through G(i)-protein-mediated inhibition of adenylyl cyclase. This pharmacological effect requires nicotinic acid doses that are much higher than those provided by a normal diet. Mediates nicotinic acid-induced apoptosis in mature neutrophils. Receptor activation by nicotinic acid results in reduced cAMP levels which may affect activity of cAMP-dependent protein kinase A and phosphorylation of target proteins, leading to neutrophil apoptosis. The rank order of potency for the displacement of nicotinic acid binding is 5-methyl pyrazole-3-carboxylic acid = pyridine-3-acetic acid &gt; acifran &gt; 5-methyl nicotinic acid = acipimox &gt;&gt; nicotinuric acid = nicotinamide. The polypeptide is Hydroxycarboxylic acid receptor 2 (HCAR2) (Homo sapiens (Human)).